We begin with the raw amino-acid sequence, 102 residues long: Putative toxin YafQ (102 aa).

It belongs to the RelE toxin family. YafQ subfamily.

Toxic component of a type II toxin-antitoxin (TA) system. Its cognate antitoxin is RelB. In Haemophilus influenzae (strain ATCC 51907 / DSM 11121 / KW20 / Rd), this protein is Putative toxin YafQ.